We begin with the raw amino-acid sequence, 368 residues long: MTAIIELNNLSVQFHQKGRLVTAVKDATLHIEKGDIYGVIGYSGAGKSTLVRTINLLQKPTKGQIVINGEKIFDSENPVKFTGAKLREFRQKIGMIFQHFNLLSEKTVFNNVAFALQHSQIEDKNGKKRYLTKKEKTDKVTELLKLVDLEELSDKYPAQLSGGQKQRVAIARALANDPEILISDEGTSALDPKTTNQILDLLKSLHEKLGITVVLITHEMQVVKEIANKVAVMQNGEIIEQNSLIDIFAQPKEALTKQFIETTSSVNRFIASLSRTELLAQLADDEELIHLDYSGSELEDPVVSDITKKFDVTTNIFYGNVELLQGQPFGSLVLTLKGSSEHRAAAKAYFVERHLKFEVLGKIERTVD.

One can recognise an ABC transporter domain in the interval 5–260 (IELNNLSVQF…PKEALTKQFI (256 aa)). 41–48 (GYSGAGKS) contacts ATP.

It belongs to the ABC transporter superfamily. Methionine importer (TC 3.A.1.24) family. As to quaternary structure, the complex is composed of two ATP-binding proteins (MetN), two transmembrane proteins (MetI) and a solute-binding protein (MetQ).

It localises to the cell membrane. It carries out the reaction L-methionine(out) + ATP + H2O = L-methionine(in) + ADP + phosphate + H(+). The enzyme catalyses D-methionine(out) + ATP + H2O = D-methionine(in) + ADP + phosphate + H(+). Functionally, part of the ABC transporter complex MetNIQ involved in methionine import. Responsible for energy coupling to the transport system. This chain is Methionine import ATP-binding protein MetN, found in Lactococcus lactis subsp. lactis (strain IL1403) (Streptococcus lactis).